Reading from the N-terminus, the 142-residue chain is Large ribosomal subunit protein uL13 (142 aa).

Belongs to the universal ribosomal protein uL13 family. As to quaternary structure, part of the 50S ribosomal subunit.

In terms of biological role, this protein is one of the early assembly proteins of the 50S ribosomal subunit, although it is not seen to bind rRNA by itself. It is important during the early stages of 50S assembly. The sequence is that of Large ribosomal subunit protein uL13 from Caldicellulosiruptor saccharolyticus (strain ATCC 43494 / DSM 8903 / Tp8T 6331).